The chain runs to 901 residues: HTH-type transcriptional regulator MalT (901 aa).

39 to 46 contributes to the ATP binding site; it reads SPAGYGKT. In terms of domain architecture, HTH luxR-type spans 829–894; the sequence is ELIRTSPLTQ…DAVQHAQQLL (66 aa). The H-T-H motif DNA-binding region spans 853–872; sequence NEQIAGELDVAATTIKTHIR.

It belongs to the MalT family. As to quaternary structure, monomer in solution. Oligomerizes to an active state in the presence of the positive effectors ATP and maltotriose.

Activated by ATP and maltotriose, which are both required for DNA binding. Positively regulates the transcription of the maltose regulon whose gene products are responsible for uptake and catabolism of malto-oligosaccharides. Specifically binds to the promoter region of its target genes, recognizing a short DNA motif called the MalT box. The sequence is that of HTH-type transcriptional regulator MalT from Klebsiella pneumoniae subsp. pneumoniae (strain ATCC 700721 / MGH 78578).